The sequence spans 275 residues: MAIVKVKPTSPGRRAMVKVVNKDLHKGKPHAALLDTQSSKAGRNNNGCITTRHQGGGHKQHYRVIDFRRTKDGIPAKVERLEYDPNRSANIALVLYADGERRYIIAPKGVTVGQQLMSGSEAPIRAGNTLPIRNIPVGTTIHCIEMLPGKGAQMARSAGTSAMLLAREGLYAQVRLRSGEIRRVHIECRATIGEVGNEEHSLRQIGKAGANRWRGIRPTVRGVAMNPIDHPHGGGEGRTAAGRDPVSPWGTPTKGFRTRRNKRTTTMIVQRRHKR.

The interval 224–257 (AMNPIDHPHGGGEGRTAAGRDPVSPWGTPTKGFR) is disordered.

The protein belongs to the universal ribosomal protein uL2 family. In terms of assembly, part of the 50S ribosomal subunit. Forms a bridge to the 30S subunit in the 70S ribosome.

In terms of biological role, one of the primary rRNA binding proteins. Required for association of the 30S and 50S subunits to form the 70S ribosome, for tRNA binding and peptide bond formation. It has been suggested to have peptidyltransferase activity; this is somewhat controversial. Makes several contacts with the 16S rRNA in the 70S ribosome. The protein is Large ribosomal subunit protein uL2 of Burkholderia mallei (strain NCTC 10247).